The sequence spans 497 residues: MEPAELEHALCGSLFSTQTPSWSSFGGPEHQEMSFLEQGDSTSWPSPAMTTSAEISLGEQRTKVSRWKSQEDVEERELPGLEGGPQSRAAAESTGLEATFPKATPLAQATPLSAVGTPTTERDSLPADCTASASSSSTDDLDQGIEFSAPAAWGDELGLVEERPAQCPSPQVPVLRLGWDDELRKPGAQVYMHFMQEHTCYDAMATSSKLVIFDTMLQIKKAFFALVANGVRAAPLWDSKKQSFVGMLTITDFILVLHRYYRSPLVQIYEIEEHKIETWREIYLQGCFKPLVSISPSDSLFEAVYTLIKNRIHRLPVLDPVSGAVLHILTHKRLLKFLHIFQRTLLPRPSFLYRTIQDLGIGTFRDLAVVLETAPILTALDIFVDRRVSALPVINEAGQVVGLYSRFDVIHLAAQQTYNHLDISVGEALRRRTLCLEGVLSCQPHETLGEVIDRIAREQVHRLVLVDETQHLLGVVSLSDILQALVLSPAGIDALGA.

The interval 16-143 (STQTPSWSSF…SSSSTDDLDQ (128 aa)) is disordered. Residues 39 to 54 (GDSTSWPSPAMTTSAE) show a composition bias toward polar residues. Residues 68 to 79 (KSQEDVEERELP) are compositionally biased toward basic and acidic residues. 3 consecutive CBS domains span residues 204–265 (MATS…RSPL), 287–345 (CFKP…QRTL), and 363–423 (TFRD…HLDI). ADP is bound by residues arginine 232, 247–252 (MLTITD), valine 292, 313–314 (HR), and lysine 332. AMP is bound by residues arginine 232, 247-252 (MLTITD), valine 292, histidine 313, 313-314 (HR), lysine 332, threonine 363, alanine 368, 389-390 (SA), 405-408 (SRFD), arginine 432, leucine 440, histidine 461, 461-462 (HR), and 477-480 (SLSD). ATP contacts are provided by residues arginine 232, 247–252 (MLTITD), valine 292, 313–314 (HR), arginine 314, and lysine 332. The short motif at 300–321 (LFEAVYTLIKNRIHRLPVLDPV) is the AMPK pseudosubstrate element. Residues 405-408 (SRFD), arginine 432, leucine 440, and 461-462 (HR) contribute to the ADP site. ATP is bound by residues 405–408 (SRFD), arginine 432, leucine 440, and 461–462 (HR). In terms of domain architecture, CBS 4 spans 435 to 494 (CLEGVLSCQPHETLGEVIDRIAREQVHRLVLVDETQHLLGVVSLSDILQALVLSPAGIDA).

This sequence belongs to the 5'-AMP-activated protein kinase gamma subunit family. As to quaternary structure, AMPK is a heterotrimer of an alpha catalytic subunit (PRKAA1 or PRKAA2), a beta (PRKAB1 or PRKAB2) and a gamma non-catalytic subunits (PRKAG1, PRKAG2 or PRKAG3). Interacts with FNIP1 and FNIP2. Post-translationally, phosphorylated by ULK1; leading to negatively regulate AMPK activity and suggesting the existence of a regulatory feedback loop between ULK1 and AMPK. In terms of processing, glycosylated; O-GlcNAcylated by OGT, promoting the AMP-activated protein kinase (AMPK) activity.

Functionally, AMP/ATP-binding subunit of AMP-activated protein kinase (AMPK), an energy sensor protein kinase that plays a key role in regulating cellular energy metabolism. In response to reduction of intracellular ATP levels, AMPK activates energy-producing pathways and inhibits energy-consuming processes: inhibits protein, carbohydrate and lipid biosynthesis, as well as cell growth and proliferation. AMPK acts via direct phosphorylation of metabolic enzymes, and by longer-term effects via phosphorylation of transcription regulators. AMPK also acts as a regulator of cellular polarity by remodeling the actin cytoskeleton; probably by indirectly activating myosin. The AMPK gamma3 subunit is a non-catalytic subunit with a regulatory role in muscle energy metabolism. It mediates binding to AMP, ADP and ATP, leading to AMPK activation or inhibition: AMP-binding results in allosteric activation of alpha catalytic subunit (PRKAA1 or PRKAA2) both by inducing phosphorylation and preventing dephosphorylation of catalytic subunits. ADP also stimulates phosphorylation, without stimulating already phosphorylated catalytic subunit. ATP promotes dephosphorylation of catalytic subunit, rendering the AMPK enzyme inactive. The protein is 5'-AMP-activated protein kinase subunit gamma-3 (PRKAG3) of Bos taurus (Bovine).